Consider the following 491-residue polypeptide: Transcription factor AP-2-alpha (491 aa).

A disordered region spans residues 74 to 161; that stretch reads GASNGTARLP…GQRQSQESGL (88 aa). Residues 111 to 116 carry the PPxY motif motif; that stretch reads YFPPPY. Low complexity-rich tracts occupy residues 119–128 and 142–155; these read IYPQSQDPYS and QPQP…GQRQ. Glycyl lysine isopeptide (Lys-Gly) (interchain with G-Cter in SUMO2) cross-links involve residues Lys-231 and Lys-238. At Ser-293 the chain carries Phosphoserine; by PKA. Positions 334–464 are H-S-H (helix-span-helix), dimerization; that stretch reads RRKAANVTLL…YLTEALKAMD (131 aa). Positions 468–481 are enriched in polar residues; that stretch reads LSNNPNSHTDNSAK. Positions 468 to 491 are disordered; that stretch reads LSNNPNSHTDNSAKSSDKEEKHRK. Residues 482–491 show a composition bias toward basic and acidic residues; the sequence is SSDKEEKHRK.

It belongs to the AP-2 family. In terms of assembly, binds DNA as a dimer. Can form homodimers or heterodimers with other AP-2 family members. Interacts with WWOX. Interacts with CITED4. Interacts with UBE2I. Interacts with RALBP1 in a complex also containing EPN1 and NUMB during interphase and mitosis. Interacts with KCTD1; this interaction represses transcription activation. Interacts (via C-terminus) with CITED2 (via C-terminus); the interaction stimulates TFAP2A-transcriptional activation. Interacts (via N-terminus) with EP300 (via N-terminus); the interaction requires CITED2. Interacts with KCTD15; this interaction inhibits TFAP2A transcriptional activation.

It localises to the nucleus. Functionally, sequence-specific DNA-binding protein that interacts with inducible viral and cellular enhancer elements to regulate transcription of selected genes. AP-2 factors bind to the consensus sequence 5'-GCCNNNGGC-3' and activate genes involved in a large spectrum of important biological functions including proper eye, face, body wall, limb and neural tube development. They also suppress a number of genes including MCAM/MUC18, C/EBP alpha and MYC. AP-2-alpha is the only AP-2 protein required for early morphogenesis of the lens vesicle. Together with the CITED2 coactivator, stimulates the PITX2 P1 promoter transcription activation. Associates with chromatin to the PITX2 P1 promoter region. This Ovis aries (Sheep) protein is Transcription factor AP-2-alpha (TFAP2A).